A 200-amino-acid chain; its full sequence is ATP-dependent Clp protease proteolytic subunit 2 (200 aa).

The active-site Nucleophile is serine 99. Histidine 124 is an active-site residue.

Belongs to the peptidase S14 family. Fourteen ClpP subunits assemble into 2 heptameric rings which stack back to back to give a disk-like structure with a central cavity, resembling the structure of eukaryotic proteasomes.

It localises to the cytoplasm. It catalyses the reaction Hydrolysis of proteins to small peptides in the presence of ATP and magnesium. alpha-casein is the usual test substrate. In the absence of ATP, only oligopeptides shorter than five residues are hydrolyzed (such as succinyl-Leu-Tyr-|-NHMec, and Leu-Tyr-Leu-|-Tyr-Trp, in which cleavage of the -Tyr-|-Leu- and -Tyr-|-Trp bonds also occurs).. Cleaves peptides in various proteins in a process that requires ATP hydrolysis. Has a chymotrypsin-like activity. Plays a major role in the degradation of misfolded proteins. The sequence is that of ATP-dependent Clp protease proteolytic subunit 2 from Treponema denticola (strain ATCC 35405 / DSM 14222 / CIP 103919 / JCM 8153 / KCTC 15104).